The following is a 423-amino-acid chain: tRNA-dihydrouridine(16/17) synthase [NAD(P)(+)] (423 aa).

T2 carries the post-translational modification N-acetylthreonine. FMN is bound by residues 35–37 (PMV) and Q92. The Proton donor role is filled by C121. Residues K160, H188, 223–225 (NGN), and 247–248 (AE) each bind FMN. Residues 404-423 (KKRKADVPLESADKKKDVKA) form a disordered region. Residues 408-423 (ADVPLESADKKKDVKA) show a composition bias toward basic and acidic residues.

It belongs to the Dus family. Dus1 subfamily. In terms of assembly, monomer. The cofactor is FMN.

It carries out the reaction 5,6-dihydrouridine(16) in tRNA + NADP(+) = uridine(16) in tRNA + NADPH + H(+). The enzyme catalyses 5,6-dihydrouridine(16) in tRNA + NAD(+) = uridine(16) in tRNA + NADH + H(+). The catalysed reaction is 5,6-dihydrouridine(17) in tRNA + NAD(+) = uridine(17) in tRNA + NADH + H(+). It catalyses the reaction 5,6-dihydrouridine(17) in tRNA + NADP(+) = uridine(17) in tRNA + NADPH + H(+). It carries out the reaction a 5,6-dihydrouridine in mRNA + NAD(+) = a uridine in mRNA + NADH + H(+). The enzyme catalyses a 5,6-dihydrouridine in mRNA + NADP(+) = a uridine in mRNA + NADPH + H(+). Functionally, catalyzes the synthesis of dihydrouridine, a modified base found in the D-loop of most tRNAs. Specifically modifies U16 and U17 in cytoplasmic tRNAs. Also able to mediate dihydrouridylation of some mRNAs, thereby affecting their translation. The sequence is that of tRNA-dihydrouridine(16/17) synthase [NAD(P)(+)] from Saccharomyces cerevisiae (strain ATCC 204508 / S288c) (Baker's yeast).